Consider the following 383-residue polypeptide: NifS-like protein (383 aa).

Pyridoxal 5'-phosphate contacts are provided by residues 58-59 and 184-186; these read SE and SIN.

This sequence belongs to the class-V pyridoxal-phosphate-dependent aminotransferase family. NifS/IscS subfamily. Pyridoxal 5'-phosphate is required as a cofactor.

The protein localises to the virion. The chain is NifS-like protein from African swine fever virus (strain Badajoz 1971 Vero-adapted) (Ba71V).